The chain runs to 144 residues: L-fucose mutarotase (144 aa).

The active-site Proton donor is the histidine 22. Substrate contacts are provided by residues aspartate 30, arginine 109, and 131–133 (YGN).

Belongs to the RbsD / FucU family. FucU mutarotase subfamily. In terms of assembly, homodecamer.

It is found in the cytoplasm. The enzyme catalyses alpha-L-fucose = beta-L-fucose. It functions in the pathway carbohydrate metabolism; L-fucose metabolism. In terms of biological role, involved in the anomeric conversion of L-fucose. The sequence is that of L-fucose mutarotase from Haemophilus influenzae (strain PittGG).